The sequence spans 410 residues: Arginine deiminase (410 aa).

The active-site Amidino-cysteine intermediate is the Cys400.

The protein belongs to the arginine deiminase family.

The protein localises to the cytoplasm. It catalyses the reaction L-arginine + H2O = L-citrulline + NH4(+). It functions in the pathway amino-acid degradation; L-arginine degradation via ADI pathway; carbamoyl phosphate from L-arginine: step 1/2. This Lactococcus lactis subsp. cremoris (strain MG1363) protein is Arginine deiminase.